A 419-amino-acid polypeptide reads, in one-letter code: Isocitrate dehydrogenase [NADP] 1 (419 aa).

An NADP(+)-binding site is contributed by Thr105. Residues Ser114, Asn116, Arg120, Arg130, and Arg154 each coordinate D-threo-isocitrate. A Mg(2+)-binding site is contributed by Asp308. NADP(+)-binding positions include 340-346 (HGTAPKY), Asn353, Tyr392, and Arg396.

This sequence belongs to the isocitrate and isopropylmalate dehydrogenases family. In terms of assembly, homodimer. Mg(2+) serves as cofactor. The cofactor is Mn(2+).

It catalyses the reaction D-threo-isocitrate + NADP(+) = 2-oxoglutarate + CO2 + NADPH. IDH activity is not significantly affected by monovalent cations. The combined addition of Mn(2+) and another divalent cation results in the decrease of the activity. Catalyzes the oxidative decarboxylation of isocitrate to 2-oxoglutarate and carbon dioxide with the concomitant reduction of NADP(+). Cannot use NAD(+). This is Isocitrate dehydrogenase [NADP] 1 from Psychrobacter sp. (strain 13A).